We begin with the raw amino-acid sequence, 60 residues long: Homeobox protein CHOX-CAD2 (60 aa).

A DNA-binding region (homeobox) is located at residues 1 to 60 (KEKYRVVYTDHQRLELEKEFHCNRYITIRRKSELAVNLGLSERQVKSWFQNRRAKERKII).

The protein belongs to the Caudal homeobox family.

It is found in the nucleus. The sequence is that of Homeobox protein CHOX-CAD2 (CHOX-CAD2) from Gallus gallus (Chicken).